Consider the following 943-residue polypeptide: Neutral alpha-glucosidase AB (943 aa).

The first 23 residues, 1–23 (MRKLVILIILSIVCSLFIGSIES), serve as a signal peptide directing secretion. Residues 186–231 (FEPISDKPQPLPPKEKKSEEENKEANQEEDNNNNNNDNNEEQQVST) form a disordered region. Over residues 198-211 (PKEKKSEEENKEAN) the composition is skewed to basic and acidic residues. The active-site Nucleophile is the Asp540. Glu543 is an active-site residue. Asp617 acts as the Proton donor in catalysis. 3 N-linked (GlcNAc...) asparagine glycosylation sites follow: Asn878, Asn887, and Asn907.

This sequence belongs to the glycosyl hydrolase 31 family.

The protein localises to the endoplasmic reticulum. It is found in the golgi apparatus. It carries out the reaction N(4)-(alpha-D-Glc-(1-&gt;3)-alpha-D-Man-(1-&gt;2)-alpha-D-Man-(1-&gt;2)-alpha-D-Man-(1-&gt;3)-[alpha-D-Man-(1-&gt;2)-alpha-D-Man-(1-&gt;3)-[alpha-D-Man-(1-&gt;2)-alpha-D-Man-(1-&gt;6)]-alpha-D-Man-(1-&gt;6)]-beta-D-Man-(1-&gt;4)-beta-D-GlcNAc-(1-&gt;4)-beta-D-GlcNAc)-L-asparaginyl-[protein] + H2O = N(4)-(alpha-D-Man-(1-&gt;2)-alpha-D-Man-(1-&gt;2)-alpha-D-Man-(1-&gt;3)-[alpha-D-Man-(1-&gt;2)-alpha-D-Man-(1-&gt;3)-[alpha-D-Man-(1-&gt;2)-alpha-D-Man-(1-&gt;6)]-alpha-D-Man-(1-&gt;6)]-beta-D-Man-(1-&gt;4)-beta-D-GlcNAc-(1-&gt;4)-beta-D-GlcNAc)-L-asparaginyl-[protein] (N-glucan mannose isomer 9A1,2,3B1,2,3) + beta-D-glucose. The catalysed reaction is N(4)-(alpha-D-Glc-(1-&gt;3)-alpha-D-Glc-(1-&gt;3)-alpha-D-Man-(1-&gt;2)-alpha-D-Man-(1-&gt;2)-alpha-D-Man-(1-&gt;3)-[alpha-D-Man-(1-&gt;2)-alpha-D-Man-(1-&gt;3)-[alpha-D-Man-(1-&gt;2)-alpha-D-Man-(1-&gt;6)]-alpha-D-Man-(1-&gt;6)]-beta-D-Man-(1-&gt;4)-beta-D-GlcNAc-(1-&gt;4)-beta-D-GlcNAc)-L-asparaginyl-[protein] + H2O = N(4)-(alpha-D-Glc-(1-&gt;3)-alpha-D-Man-(1-&gt;2)-alpha-D-Man-(1-&gt;2)-alpha-D-Man-(1-&gt;3)-[alpha-D-Man-(1-&gt;2)-alpha-D-Man-(1-&gt;3)-[alpha-D-Man-(1-&gt;2)-alpha-D-Man-(1-&gt;6)]-alpha-D-Man-(1-&gt;6)]-beta-D-Man-(1-&gt;4)-beta-D-GlcNAc-(1-&gt;4)-beta-D-GlcNAc)-L-asparaginyl-[protein] + beta-D-glucose. Its pathway is glycan metabolism; N-glycan metabolism. Its function is as follows. Cleaves sequentially the 2 innermost alpha-1,3-linked glucose residues from N-linked oligosaccharides on newly synthesized glycoproteins. The polypeptide is Neutral alpha-glucosidase AB (modA) (Dictyostelium discoideum (Social amoeba)).